A 449-amino-acid polypeptide reads, in one-letter code: tRNA-2-methylthio-N(6)-dimethylallyladenosine synthase (449 aa).

Residues 2–119 (KGLFIRTYGC…LPEMIARASR (118 aa)) form the MTTase N-terminal domain. 6 residues coordinate [4Fe-4S] cluster: Cys-11, Cys-47, Cys-82, Cys-157, Cys-161, and Cys-164. The 236-residue stretch at 143-378 (EADGPAAFVS…QALLREQQTE (236 aa)) folds into the Radical SAM core domain. The 63-residue stretch at 381–443 (ASQIGKTLPV…LNSLTGELVR (63 aa)) folds into the TRAM domain.

It belongs to the methylthiotransferase family. MiaB subfamily. Monomer. Requires [4Fe-4S] cluster as cofactor.

It localises to the cytoplasm. It carries out the reaction N(6)-dimethylallyladenosine(37) in tRNA + (sulfur carrier)-SH + AH2 + 2 S-adenosyl-L-methionine = 2-methylsulfanyl-N(6)-dimethylallyladenosine(37) in tRNA + (sulfur carrier)-H + 5'-deoxyadenosine + L-methionine + A + S-adenosyl-L-homocysteine + 2 H(+). Its function is as follows. Catalyzes the methylthiolation of N6-(dimethylallyl)adenosine (i(6)A), leading to the formation of 2-methylthio-N6-(dimethylallyl)adenosine (ms(2)i(6)A) at position 37 in tRNAs that read codons beginning with uridine. The chain is tRNA-2-methylthio-N(6)-dimethylallyladenosine synthase from Hyphomonas neptunium (strain ATCC 15444).